An 894-amino-acid polypeptide reads, in one-letter code: Alpha-actinin-2 (894 aa).

Positions 1-254 are actin-binding; it reads MNQIEPGVQY…IMTYVSCFYH (254 aa). Calponin-homology (CH) domains lie at 38 to 142 and 151 to 257; these read KQQR…LRFA and TSAK…HAFA. Thr-237 bears the Phosphothreonine mark. Spectrin repeat units follow at residues 281–391, 401–506, 516–627, and 637–740; these read RLME…WLLN, HLAE…ALER, QLHL…SLQE, and RLRR…EVET. EF-hand domains lie at 753 to 788 and 789 to 824; these read EQMNEFRASFNHFDRRKNGLMDHEDFRACLISMGYD and LGEAEFARIMTLVDPNGQGTVTFQSFIDFMTRETAD. The Ca(2+) site is built by Asp-766, Asn-770, Asp-777, Asp-802, Asn-804, and Thr-808.

The protein belongs to the alpha-actinin family. In terms of assembly, homodimer; antiparallel. Also forms heterodimers with ACTN3. Interacts with ADAM12, MYOZ1, MYOZ2 and MYOZ3. Interacts via its C-terminal region with the LDB3 PDZ domain. Interacts with XIRP2. Interacts with DST (via N-terminus). Interacts with PARVB. Interacts with SYNPO2. In terms of processing, ubiquitinated by FBXL22, leading to proteasomal degradation.

The protein localises to the cytoplasm. It is found in the myofibril. Its subcellular location is the sarcomere. The protein resides in the z line. Functionally, F-actin cross-linking protein which is thought to anchor actin to a variety of intracellular structures. This is a bundling protein. The polypeptide is Alpha-actinin-2 (ACTN2) (Bos taurus (Bovine)).